The chain runs to 116 residues: Ribosome-binding factor A (116 aa).

Belongs to the RbfA family. As to quaternary structure, monomer. Binds 30S ribosomal subunits, but not 50S ribosomal subunits or 70S ribosomes.

The protein localises to the cytoplasm. One of several proteins that assist in the late maturation steps of the functional core of the 30S ribosomal subunit. Associates with free 30S ribosomal subunits (but not with 30S subunits that are part of 70S ribosomes or polysomes). Required for efficient processing of 16S rRNA. May interact with the 5'-terminal helix region of 16S rRNA. The polypeptide is Ribosome-binding factor A (Streptococcus pneumoniae (strain ATCC 700669 / Spain 23F-1)).